The chain runs to 130 residues: Cholecystokinin (130 aa).

The signal sequence occupies residues 1–20; it reads MYGGICICVLLAALSVSSLG. The propeptide occupies 21–48; the sequence is QQPAGSHDGSPVAAELQQSLTEPHRHSR. The disordered stretch occupies residues 21–63; the sequence is QQPAGSHDGSPVAAELQQSLTEPHRHSRAPSSAGPLKPAPRLD. The residue at position 112 (Tyr112) is a Sulfotyrosine. The residue at position 118 (Phe118) is a Phenylalanine amide. A propeptide spanning residues 122–130 is cleaved from the precursor; it reads SAEEYEYSS. Sulfotyrosine is present on residues Tyr126 and Tyr128.

It belongs to the gastrin/cholecystokinin family. Post-translationally, the precursor is cleaved by proteases to produce a number of active cholecystokinins. In the small intestine, the major production site is around the vitelline diverticulum.

Its subcellular location is the secreted. Functionally, this peptide hormone induces gall bladder contraction and the release of pancreatic enzymes in the gut. Its function in the brain is not clear. It also decreases food intake and regulates gastrointestinal physiological processes. This is Cholecystokinin (CCK) from Gallus gallus (Chicken).